Consider the following 145-residue polypeptide: RxLR effector protein BLR40 (145 aa).

The signal sequence occupies residues 1–22 (MLLSRAISVVALLACICCGVHT). Positions 44 to 58 (RRLRTSVDLVDNEER) match the RxLR-dEER motif.

Belongs to the RxLR effector family.

It localises to the secreted. It is found in the host cell membrane. Secreted effector that triggers a robust hypersensitive response (HR) in Lactuca sativa cv. Design that is resistant to multiple B.lactucae races, including Bl:24. This Bremia lactucae (Lettuce downy mildew) protein is RxLR effector protein BLR40.